The sequence spans 358 residues: Holliday junction branch migration complex subunit RuvB (358 aa).

Residues 1–24 are disordered; the sequence is MAIKRSHNSPPATEENLLTPNPTI. The span at 8-22 shows a compositional bias: polar residues; it reads NSPPATEENLLTPNP. The segment at 13–195 is large ATPase domain (RuvB-L); that stretch reads TEENLLTPNP…FGLIQRLRFY (183 aa). ATP contacts are provided by residues Ile34, Arg35, Gly76, Lys79, Thr80, Thr81, 142 to 144, Arg185, Tyr195, and Arg232; that span reads EDY. Position 80 (Thr80) interacts with Mg(2+). Residues 196 to 266 form a small ATPAse domain (RuvB-S) region; that stretch reads AVEELTAIIL…LAAEGLNQLN (71 aa). A head domain (RuvB-H) region spans residues 269–358; sequence SMGLDWTDRL…KDRSLPLFEF (90 aa). Positions 324 and 329 each coordinate DNA.

Belongs to the RuvB family. In terms of assembly, homohexamer. Forms an RuvA(8)-RuvB(12)-Holliday junction (HJ) complex. HJ DNA is sandwiched between 2 RuvA tetramers; dsDNA enters through RuvA and exits via RuvB. An RuvB hexamer assembles on each DNA strand where it exits the tetramer. Each RuvB hexamer is contacted by two RuvA subunits (via domain III) on 2 adjacent RuvB subunits; this complex drives branch migration. In the full resolvosome a probable DNA-RuvA(4)-RuvB(12)-RuvC(2) complex forms which resolves the HJ.

The protein localises to the cytoplasm. It carries out the reaction ATP + H2O = ADP + phosphate + H(+). In terms of biological role, the RuvA-RuvB-RuvC complex processes Holliday junction (HJ) DNA during genetic recombination and DNA repair, while the RuvA-RuvB complex plays an important role in the rescue of blocked DNA replication forks via replication fork reversal (RFR). RuvA specifically binds to HJ cruciform DNA, conferring on it an open structure. The RuvB hexamer acts as an ATP-dependent pump, pulling dsDNA into and through the RuvAB complex. RuvB forms 2 homohexamers on either side of HJ DNA bound by 1 or 2 RuvA tetramers; 4 subunits per hexamer contact DNA at a time. Coordinated motions by a converter formed by DNA-disengaged RuvB subunits stimulates ATP hydrolysis and nucleotide exchange. Immobilization of the converter enables RuvB to convert the ATP-contained energy into a lever motion, pulling 2 nucleotides of DNA out of the RuvA tetramer per ATP hydrolyzed, thus driving DNA branch migration. The RuvB motors rotate together with the DNA substrate, which together with the progressing nucleotide cycle form the mechanistic basis for DNA recombination by continuous HJ branch migration. Branch migration allows RuvC to scan DNA until it finds its consensus sequence, where it cleaves and resolves cruciform DNA. The chain is Holliday junction branch migration complex subunit RuvB from Microcystis aeruginosa (strain NIES-843 / IAM M-2473).